The chain runs to 805 residues: MQFPESWLRSLVNPSIGTDELAHRLTMAGLEVEETEPAAPPFTGVVVTRIVDIAPHPDADKLRVCQVDDGSGALLQIVCGAPNAAAGLTVPLARVGAELPGGMKIGVAKMRGVQSSGMLCSARELGLSQDHAGLLELPAALRPGTDIRAALDLDDTLFTLKLTPNRADCLSILGVAREVAALTGTPLTAPAAEPVPVTIDHRLPVAIQAPDLCGRFAGRVIQGVNARAATPEWMKTRLERAGQRSVSALVDISNYVMLEVGRPSHVFDLDKIGGDLSVRWAREGETLELLNGQAVALDPKVGVVVAGEQVESLAGIMGGEATSVTLDTRNIYLEAAFWWPGAIAGRARRYKFSSEASHRFERGVDYASIPEHIELITRLILDICGGQAGPVDDQCVNLPVREPVRMRLARCHRVLGVAVERAEVAQIFTRLGLPFQEQGDDFVVTPPSYRFDIEIEEDLIEEVARVYGFERIPDVPPVARAKMHAQPEARRGAHAVRRLVAARDYQEVVNYSFVEAAWERDYAGNDNPVRLVNPIASHLSVMRSSLIAGLVAIVRHNANRKQSRMRLFELGRVFHRDPQLADGPLEVAGVRQPLMLAGVAWGGAVEEQWGVPHRQVDFYDVKQDIEALFGARADALRFVADRYPALHPGRSARIELDGQPIGWLGELHPQWTQQADLHHAPVVFELDFEALAERRLPAVRKLSRQPVVVRDLALWVDAKLPAQAMLDTVAAAIARDPQLSVVQDAQVFDVWREKPVAGQTVTEKSLAFRFWLQDTEVTLDEARVADCIARIKDALVAAHNARQRA.

The tRNA-binding domain maps to 39–148 (APPFTGVVVT…AALRPGTDIR (110 aa)). Residues 399–474 (PVREPVRMRL…RVYGFERIPD (76 aa)) form the B5 domain. Mg(2+)-binding residues include D452, D458, E461, and E462. An FDX-ACB domain is found at 703–804 (SRQPVVVRDL…LVAAHNARQR (102 aa)).

It belongs to the phenylalanyl-tRNA synthetase beta subunit family. Type 1 subfamily. Tetramer of two alpha and two beta subunits. The cofactor is Mg(2+).

It is found in the cytoplasm. It catalyses the reaction tRNA(Phe) + L-phenylalanine + ATP = L-phenylalanyl-tRNA(Phe) + AMP + diphosphate + H(+). This chain is Phenylalanine--tRNA ligase beta subunit, found in Bordetella pertussis (strain Tohama I / ATCC BAA-589 / NCTC 13251).